Consider the following 1120-residue polypeptide: Cluster 41 polyketide synthase (1120 aa).

The Ketosynthase family 3 (KS3) domain occupies 7–430; sequence PHDVAVVGMG…GTVSHAIIEK (424 aa). Residues Cys178, His313, and His353 each act as for beta-ketoacyl synthase activity in the active site. The malonyl-CoA:ACP transacylase (MAT) domain stretch occupies residues 539 to 796; that stretch reads VWVFSGHGAQ…TSAISAAAED (258 aa). The active-site For acyl/malonyl transferase activity is Ser625. A ketoreductase (KR) domain region spans residues 804-943; that stretch reads IKKILSMESR…IAMQWTSWRE (140 aa). The Carrier domain maps to 1042-1116; it reads DSLSRQVREC…HIVKWLMEKT (75 aa). Ser1076 carries the post-translational modification O-(pantetheine 4'-phosphoryl)serine.

Its function is as follows. Polyketide synthase; part of the gene cluster 41 that mediates the biosynthesis of an extracellular and diffusible metabolite that is able to stimulate colony sclerotial production. The sequence is that of Cluster 41 polyketide synthase from Aspergillus flavus (strain ATCC 200026 / FGSC A1120 / IAM 13836 / NRRL 3357 / JCM 12722 / SRRC 167).